A 136-amino-acid chain; its full sequence is Small ribosomal subunit protein eS12 (136 aa).

This sequence belongs to the eukaryotic ribosomal protein eS12 family.

This is Small ribosomal subunit protein eS12 (rps12) from Dictyostelium discoideum (Social amoeba).